The primary structure comprises 230 residues: Uracil-DNA glycosylase (230 aa).

The active-site Proton acceptor is aspartate 70.

This sequence belongs to the uracil-DNA glycosylase (UDG) superfamily. UNG family.

Its subcellular location is the cytoplasm. The catalysed reaction is Hydrolyzes single-stranded DNA or mismatched double-stranded DNA and polynucleotides, releasing free uracil.. Functionally, excises uracil residues from the DNA which can arise as a result of misincorporation of dUMP residues by DNA polymerase or due to deamination of cytosine. This chain is Uracil-DNA glycosylase, found in Pseudomonas entomophila (strain L48).